Here is a 452-residue protein sequence, read N- to C-terminus: Mannan endo-1,6-alpha-mannosidase DCW1 (452 aa).

Positions Met-1–Ala-18 are cleaved as a signal peptide. 10 N-linked (GlcNAc...) asparagine glycosylation sites follow: Asn-25, Asn-81, Asn-106, Asn-130, Asn-200, Asn-237, Asn-240, Asn-262, Asn-271, and Asn-286. Gly-431 is lipidated: GPI-anchor amidated glycine. The propeptide at Ala-432–Leu-452 is removed in mature form.

The protein belongs to the glycosyl hydrolase 76 family.

The protein resides in the cell membrane. It catalyses the reaction Random hydrolysis of (1-&gt;6)-alpha-D-mannosidic linkages in unbranched (1-&gt;6)-mannans.. Probable mannosidase required for normal synthesis of the cell wall. The protein is Mannan endo-1,6-alpha-mannosidase DCW1 (DCW1) of Candida albicans (strain SC5314 / ATCC MYA-2876) (Yeast).